The sequence spans 434 residues: MKRVTVIGAGLAGSEAAWQLAKRGVQVDLYEMRPVKQTPAHHTDQFAELVCSNSLRANQLTNAVGVLKEEMRQLDSLIMKAADLASVPAGGALAVDRHDFAGYVTETLKNHPNVTVHHEELEAIPEGPTIVATGPLTSAALSESLKQFTGEDYLYFFDAAAPILDGDTIDRDKVYLKSRYDKGEAAYLNCPMTEEEFTHFHNELIKAEVVPLKEFEKEIYFEGCMPFEVLASRGPKTLLFGPMKPVGLEDPKTGKRPYAVVQLRQDNSAGTLFNLVGFQTHLKWGEQKRIIRLIPGLENAEIVRYGVMHRNTFVNSPNLLQPTYQTRTRHDLFFAGQMTGVEGYVESAASGLTAGINAARLVNEAEPVAFPKETMMGAMAHYITTTEGKNFQPMNANFGLVPGLVGQTGRMKKPEKYALLAERALEAIKDFTDM.

8 to 13 (GAGLAG) lines the FAD pocket.

The protein belongs to the MnmG family. TrmFO subfamily. Requires FAD as cofactor.

It is found in the cytoplasm. The enzyme catalyses uridine(54) in tRNA + (6R)-5,10-methylene-5,6,7,8-tetrahydrofolate + NADH + H(+) = 5-methyluridine(54) in tRNA + (6S)-5,6,7,8-tetrahydrofolate + NAD(+). The catalysed reaction is uridine(54) in tRNA + (6R)-5,10-methylene-5,6,7,8-tetrahydrofolate + NADPH + H(+) = 5-methyluridine(54) in tRNA + (6S)-5,6,7,8-tetrahydrofolate + NADP(+). Functionally, catalyzes the folate-dependent formation of 5-methyl-uridine at position 54 (M-5-U54) in all tRNAs. The polypeptide is Methylenetetrahydrofolate--tRNA-(uracil-5-)-methyltransferase TrmFO (Exiguobacterium sibiricum (strain DSM 17290 / CCUG 55495 / CIP 109462 / JCM 13490 / 255-15)).